A 365-amino-acid polypeptide reads, in one-letter code: BTB/POZ and TAZ domain-containing protein 1 (365 aa).

The 72-residue stretch at 25 to 96 (TDVEIITSGR…LYSPSVTENE (72 aa)) folds into the BTB domain. The Nuclear localization signal signature appears at 193–202 (RKKRRRRHRR). A TAZ-type zinc finger spans residues 205 to 304 (NLYLQLSEAM…SESCRVPLCR (100 aa)). Residues 315–338 (KMVEDTKWKVLVRRVASAKAMSSL) form a caM-binding region.

As to quaternary structure, interacts with CUL3A. Interacts with GTE9/BET9 and GTE11/BET10 through the BTB domain. As to expression, preferentially expressed in young leaves, roots and stems.

The protein localises to the nucleus. It is found in the cytoplasm. It participates in protein modification; protein ubiquitination. In terms of biological role, may act as a substrate-specific adapter of an E3 ubiquitin-protein ligase complex (CUL3-RBX1-BTB) which mediates the ubiquitination and subsequent proteasomal degradation of target proteins. Also targeted for degradation by the 26S proteasome pathway. May be involved in gametophyte development. The protein is BTB/POZ and TAZ domain-containing protein 1 (BT1) of Arabidopsis thaliana (Mouse-ear cress).